A 376-amino-acid chain; its full sequence is Putative glutamate--cysteine ligase 2-1 (376 aa).

Belongs to the glutamate--cysteine ligase type 2 family. YbdK subfamily.

It catalyses the reaction L-cysteine + L-glutamate + ATP = gamma-L-glutamyl-L-cysteine + ADP + phosphate + H(+). In terms of biological role, ATP-dependent carboxylate-amine ligase which exhibits weak glutamate--cysteine ligase activity. In Mycolicibacterium smegmatis (strain ATCC 700084 / mc(2)155) (Mycobacterium smegmatis), this protein is Putative glutamate--cysteine ligase 2-1.